Consider the following 344-residue polypeptide: NADH-quinone oxidoreductase subunit H 2 (344 aa).

The next 8 helical transmembrane spans lie at 13–33, 82–102, 116–136, 161–181, 188–208, 240–260, 280–300, and 319–339; these read LPILFKIVAIVLPLILIVAWL, ILFLLAPVLAIAPALAVWAVI, ALLYILAIGSMSVYGIILAGW, MGFALVGVLIAGGSLNLGEIV, FWHWFWLPLFPLFLIYFISGV, LFFLAEYIEMILVSTLAALMF, VPGIVWLLIKTAIFLFFYLWF, and VFIPITIVWLLVVGGARVAQL.

It belongs to the complex I subunit 1 family. As to quaternary structure, NDH-1 is composed of 14 different subunits. Subunits NuoA, H, J, K, L, M, N constitute the membrane sector of the complex.

Its subcellular location is the cell inner membrane. It carries out the reaction a quinone + NADH + 5 H(+)(in) = a quinol + NAD(+) + 4 H(+)(out). In terms of biological role, NDH-1 shuttles electrons from NADH, via FMN and iron-sulfur (Fe-S) centers, to quinones in the respiratory chain. The immediate electron acceptor for the enzyme in this species is believed to be ubiquinone. Couples the redox reaction to proton translocation (for every two electrons transferred, four hydrogen ions are translocated across the cytoplasmic membrane), and thus conserves the redox energy in a proton gradient. This subunit may bind ubiquinone. The chain is NADH-quinone oxidoreductase subunit H 2 from Nitrosococcus oceani (strain ATCC 19707 / BCRC 17464 / JCM 30415 / NCIMB 11848 / C-107).